Reading from the N-terminus, the 423-residue chain is Flotillin-1 (423 aa).

It belongs to the band 7/mec-2 family. Flotillin subfamily. As to quaternary structure, heterooligomeric complex of flotillin-1 and flotillin-2 and caveolin-1 and caveolin-2. In terms of tissue distribution, normally expressed in growing retinal exons of newly differentiated ganglion cells at the retinal margin. After optic nerve injury, expressed in all retinal ganglion cells and retinal axons. Also expressed in endothelial cells, spinal cord, larval and adult skin, muscle processes, thymus and gill macrophages.

The protein localises to the cell membrane. It is found in the endosome. Its subcellular location is the membrane. It localises to the caveola. The protein resides in the melanosome. The protein localises to the membrane raft. Its function is as follows. May act as a scaffolding protein within caveolar membranes, functionally participating in formation of caveolae or caveolae-like vesicles. The protein is Flotillin-1 (flot1) of Carassius auratus (Goldfish).